The primary structure comprises 763 residues: Phosphoglycerol transferase I (763 aa).

Transmembrane regions (helical) follow at residues 1-21 (MSEL…AWKA), 26-46 (WWFA…ITLF), 77-97 (ILPG…LGWI), and 108-128 (FGYS…SPAF).

This sequence belongs to the OpgB family.

The protein resides in the cell inner membrane. It catalyses the reaction a phosphatidylglycerol + a membrane-derived-oligosaccharide D-glucose = a 1,2-diacyl-sn-glycerol + a membrane-derived-oligosaccharide 6-(glycerophospho)-D-glucose.. The protein operates within glycan metabolism; osmoregulated periplasmic glucan (OPG) biosynthesis. Functionally, transfers a phosphoglycerol residue from phosphatidylglycerol to the membrane-bound nascent glucan backbones. This chain is Phosphoglycerol transferase I, found in Escherichia coli O127:H6 (strain E2348/69 / EPEC).